We begin with the raw amino-acid sequence, 56 residues long: Ribosome biogenesis protein Nop10 (56 aa).

The protein belongs to the NOP10 family.

Its function is as follows. Involved in ribosome biogenesis; more specifically in 18S rRNA pseudouridylation and in cleavage of pre-rRNA. The polypeptide is Ribosome biogenesis protein Nop10 (Saccharolobus islandicus (strain Y.N.15.51 / Yellowstone #2) (Sulfolobus islandicus)).